We begin with the raw amino-acid sequence, 91 residues long: Large ribosomal subunit protein bL27 (91 aa).

Positions 1 to 21 (MAHKKAGGSSRNGRDSESKRL) are disordered.

It belongs to the bacterial ribosomal protein bL27 family.

The sequence is that of Large ribosomal subunit protein bL27 from Azoarcus sp. (strain BH72).